The sequence spans 142 residues: Photosystem II extrinsic protein U (142 aa).

Residues 1–29 (MKGLVRLLTVFSLLLGCWGWLGTTQIAQA) form the signal peptide.

The protein belongs to the PsbU family. As to quaternary structure, PSII is composed of 1 copy each of membrane proteins PsbA, PsbB, PsbC, PsbD, PsbE, PsbF, PsbH, PsbI, PsbJ, PsbK, PsbL, PsbM, PsbT, PsbX, PsbY, PsbZ, Psb30/Ycf12, peripheral proteins PsbO, CyanoQ (PsbQ), PsbU, PsbV and a large number of cofactors. It forms dimeric complexes.

It localises to the cellular thylakoid membrane. One of the extrinsic, lumenal subunits of photosystem II (PSII). PSII is a light-driven water plastoquinone oxidoreductase, using light energy to abstract electrons from H(2)O, generating a proton gradient subsequently used for ATP formation. The extrinsic proteins stabilize the structure of photosystem II oxygen-evolving complex (OEC), the ion environment of oxygen evolution and protect the OEC against heat-induced inactivation. The polypeptide is Photosystem II extrinsic protein U (Trichormus variabilis (strain ATCC 29413 / PCC 7937) (Anabaena variabilis)).